The following is a 286-amino-acid chain: 2-hydroxy-6-oxo-6-phenylhexa-2,4-dienoate hydrolase (286 aa).

Substrate contacts are provided by residues 42 to 43 (GG), Asn51, Lys111, Ser180, and Arg190. Positions 173 to 271 (NVFLFDQSLI…RCVHWAQWEH (99 aa)) constitute an AB hydrolase-1 domain. His265 acts as the Proton acceptor in catalysis. Trp266 lines the substrate pocket.

It belongs to the AB hydrolase superfamily. BphD family. As to quaternary structure, homodimer.

The enzyme catalyses 2,6-dioxo-6-phenylhexa-3-enoate + H2O = 2-oxopent-4-enoate + benzoate + H(+). It functions in the pathway xenobiotic degradation; biphenyl degradation; 2-hydroxy-2,4-pentadienoate and benzoate from biphenyl: step 4/4. Its function is as follows. Catalyzes an unusual C-C bond hydrolysis of 2-hydroxy-6-oxo-6-phenylhexa-2,4-dienoic acid (HOPDA) to produce benzoic acid and 2-hydroxy-2,4-pentadienoic acid (HPD). The polypeptide is 2-hydroxy-6-oxo-6-phenylhexa-2,4-dienoate hydrolase (Delftia acidovorans (Pseudomonas acidovorans)).